The following is a 485-amino-acid chain: Cysteine--tRNA ligase (485 aa).

Cys28 provides a ligand contact to Zn(2+). A 'HIGH' region motif is present at residues 30–40 (MTVYDLCHVGH). Positions 209, 234, and 238 each coordinate Zn(2+). The short motif at 266–270 (KMSKS) is the 'KMSKS' region element. An ATP-binding site is contributed by Lys269.

This sequence belongs to the class-I aminoacyl-tRNA synthetase family. As to quaternary structure, monomer. Zn(2+) is required as a cofactor.

It localises to the cytoplasm. It carries out the reaction tRNA(Cys) + L-cysteine + ATP = L-cysteinyl-tRNA(Cys) + AMP + diphosphate. This is Cysteine--tRNA ligase from Nitrosococcus oceani (strain ATCC 19707 / BCRC 17464 / JCM 30415 / NCIMB 11848 / C-107).